A 164-amino-acid polypeptide reads, in one-letter code: 2-C-methyl-D-erythritol 2,4-cyclodiphosphate synthase (164 aa).

A divalent metal cation-binding residues include Asp8 and His10. Residues 8–10 (DVH) and 34–35 (HS) contribute to the 4-CDP-2-C-methyl-D-erythritol 2-phosphate site. His42 is a binding site for a divalent metal cation. 4-CDP-2-C-methyl-D-erythritol 2-phosphate is bound by residues 56–58 (DIG), 132–135 (TTEE), Phe139, and Lys142.

This sequence belongs to the IspF family. Homotrimer. The cofactor is a divalent metal cation.

The catalysed reaction is 4-CDP-2-C-methyl-D-erythritol 2-phosphate = 2-C-methyl-D-erythritol 2,4-cyclic diphosphate + CMP. It participates in isoprenoid biosynthesis; isopentenyl diphosphate biosynthesis via DXP pathway; isopentenyl diphosphate from 1-deoxy-D-xylulose 5-phosphate: step 4/6. Its function is as follows. Involved in the biosynthesis of isopentenyl diphosphate (IPP) and dimethylallyl diphosphate (DMAPP), two major building blocks of isoprenoid compounds. Catalyzes the conversion of 4-diphosphocytidyl-2-C-methyl-D-erythritol 2-phosphate (CDP-ME2P) to 2-C-methyl-D-erythritol 2,4-cyclodiphosphate (ME-CPP) with a corresponding release of cytidine 5-monophosphate (CMP). The chain is 2-C-methyl-D-erythritol 2,4-cyclodiphosphate synthase from Clostridium kluyveri (strain NBRC 12016).